The primary structure comprises 119 residues: Toxin ICK-9 (119 aa).

Positions 1-19 are cleaved as a signal peptide; sequence MMKLYSLVIIATLAAAAFA. Cystine bridges form between Cys59–Cys74, Cys67–Cys80, Cys71–Cys116, and Cys73–Cys87.

The protein belongs to the neurotoxin 25 family. ICK-8 subfamily. As to expression, expressed by the venom gland.

The protein resides in the secreted. Its function is as follows. Ion channel inhibitor. The chain is Toxin ICK-9 from Trittame loki (Brush-footed trapdoor spider).